Reading from the N-terminus, the 114-residue chain is Transmembrane protein 256 (114 aa).

The first 25 residues, 1 to 25, serve as a signal peptide directing secretion; it reads MNAASLVQRVAGISGALAVAAGAYG. The Extracellular segment spans residues 26-64; sequence AHGFRRSEASDYQRELFDTANKYHFYHSLALLGAARCRK. Residues 65–85 traverse the membrane as a helical segment; that stretch reads PALAGVILLTGMGCFCGPLYH. The Cytoplasmic segment spans residues 86 to 93; it reads QPLTNDPS. The helical transmembrane segment at 94–114 threads the bilayer; it reads FSKLAPIGGSLLIVGWAAMAL.

It belongs to the TMEM256 family.

It localises to the membrane. This chain is Transmembrane protein 256 (tmem256), found in Danio rerio (Zebrafish).